The sequence spans 287 residues: 4-hydroxybenzoate octaprenyltransferase (287 aa).

The next 9 helical transmembrane spans lie at 21 to 41 (VGIF…AKGA), 44 to 64 (FKIA…GCIV), 91 to 111 (VTEA…LVLL), 112 to 132 (LNRL…VYPF), 139 to 159 (LPQL…FAAT), 160 to 180 (VGHV…WPIV), 211 to 231 (LMIG…GWYL), 235 to 255 (YWFY…QFLI), and 263 to 283 (CFAA…GILL).

It belongs to the UbiA prenyltransferase family. It depends on Mg(2+) as a cofactor.

The protein resides in the cell inner membrane. It catalyses the reaction all-trans-octaprenyl diphosphate + 4-hydroxybenzoate = 4-hydroxy-3-(all-trans-octaprenyl)benzoate + diphosphate. It participates in cofactor biosynthesis; ubiquinone biosynthesis. Functionally, catalyzes the prenylation of para-hydroxybenzoate (PHB) with an all-trans polyprenyl group. Mediates the second step in the final reaction sequence of ubiquinone-8 (UQ-8) biosynthesis, which is the condensation of the polyisoprenoid side chain with PHB, generating the first membrane-bound Q intermediate 3-octaprenyl-4-hydroxybenzoate. In Coxiella burnetii (strain CbuG_Q212) (Coxiella burnetii (strain Q212)), this protein is 4-hydroxybenzoate octaprenyltransferase.